The primary structure comprises 1183 residues: Phospholipid-transporting ATPase FetA (1183 aa).

3 helical membrane passes run isoleucine 96–glycine 116, valine 299–histidine 319, and alanine 348–valine 368. The 4-aspartylphosphate intermediate role is filled by aspartate 416. ATP is bound by residues aspartate 416, lysine 417, threonine 418, glutamate 519, phenylalanine 560, lysine 583, arginine 617, threonine 697, glycine 698, aspartate 699, arginine 812, and lysine 818. Aspartate 416 is a binding site for Mg(2+). Threonine 418 is a binding site for Mg(2+). Aspartate 838 serves as a coordination point for Mg(2+). Asparagine 841 and aspartate 842 together coordinate ATP. A Mg(2+)-binding site is contributed by aspartate 842. 6 consecutive transmembrane segments (helical) span residues phenylalanine 904–valine 924, isoleucine 927–leucine 947, cysteine 981–phenylalanine 1001, phenylalanine 1014–alanine 1034, tryptophan 1049–leucine 1069, and isoleucine 1090–phenylalanine 1110.

The protein belongs to the cation transport ATPase (P-type) (TC 3.A.3) family. Type IV subfamily. It depends on Mg(2+) as a cofactor. Highly expressed in testis.

The protein resides in the cytoplasmic vesicle. Its subcellular location is the secretory vesicle. It localises to the acrosome membrane. The enzyme catalyses ATP + H2O + phospholipidSide 1 = ADP + phosphate + phospholipidSide 2.. Its function is as follows. P4-ATPase flippase which catalyzes the hydrolysis of ATP coupled to the transport of aminophospholipids from the outer to the inner leaflet of various membranes and ensures the maintenance of asymmetric distribution of phospholipids. Phospholipid translocation also seems to be implicated in vesicle formation and in uptake of lipid signaling molecules. May play a role in phospholid transport across membranes and in acrosome formation. This Mus musculus (Mouse) protein is Phospholipid-transporting ATPase FetA (Atp8b5).